The following is a 328-amino-acid chain: MGHQNHTFSSDFILLGLFSSSPTSVVFFLVLFVIFIMSVTENTLMILLIRSDSRLHTPMYFLLSHLSLMDILHVSNIVPKMVTNFLSGSRTISFAGCGFQVFLSLTLLGGECLLLAAMSCDRYVAICHPLRYPILMKEYASALMAGGSWLIGVFNSTVHTAYALQFPFCGSRAIDHFFCEVPAMLKLSCADTTRYERGVCVSAVIFLLIPFSLISASYGQIILTVLQMKSSEARKKSFSTCSFHMIVVTMYYGPFIFTYMRPKSYHTPGQDKFLAIFYTILTPTLNPFIYSFRNKDVLAVMKNMLKSNFLHKKMNRKIPECVFCLFLC.

Residues 1 to 25 lie on the Extracellular side of the membrane; the sequence is MGHQNHTFSSDFILLGLFSSSPTSV. Residue asparagine 5 is glycosylated (N-linked (GlcNAc...) asparagine). The chain crosses the membrane as a helical span at residues 26-49; it reads VFFLVLFVIFIMSVTENTLMILLI. The Cytoplasmic portion of the chain corresponds to 50–57; the sequence is RSDSRLHT. Residues 58–79 form a helical membrane-spanning segment; the sequence is PMYFLLSHLSLMDILHVSNIVP. Topologically, residues 80-100 are extracellular; sequence KMVTNFLSGSRTISFAGCGFQ. A disulfide bridge links cysteine 97 with cysteine 189. The helical transmembrane segment at 101 to 120 threads the bilayer; the sequence is VFLSLTLLGGECLLLAAMSC. At 121–139 the chain is on the cytoplasmic side; sequence DRYVAICHPLRYPILMKEY. The chain crosses the membrane as a helical span at residues 140–158; sequence ASALMAGGSWLIGVFNSTV. Over 159 to 195 the chain is Extracellular; it reads HTAYALQFPFCGSRAIDHFFCEVPAMLKLSCADTTRY. Residues 196-219 form a helical membrane-spanning segment; it reads ERGVCVSAVIFLLIPFSLISASYG. Residues 220–236 lie on the Cytoplasmic side of the membrane; sequence QIILTVLQMKSSEARKK. A helical transmembrane segment spans residues 237–259; sequence SFSTCSFHMIVVTMYYGPFIFTY. At 260–272 the chain is on the extracellular side; the sequence is MRPKSYHTPGQDK. The chain crosses the membrane as a helical span at residues 273-292; the sequence is FLAIFYTILTPTLNPFIYSF. The Cytoplasmic segment spans residues 293–328; it reads RNKDVLAVMKNMLKSNFLHKKMNRKIPECVFCLFLC.

It belongs to the G-protein coupled receptor 1 family.

It is found in the cell membrane. Odorant receptor. In Homo sapiens (Human), this protein is Olfactory receptor 2AJ1 (OR2AJ1).